The chain runs to 670 residues: Probable ATP-citrate synthase subunit 1 (670 aa).

Residues 1–22 form a disordered region; the sequence is MPSATTASTNGANGASASPAPG. ATP contacts are provided by residues 257–277 and 308–334; these read LLRY…EVGG and FKTE…KNKS. Mg(2+) is bound at residue E274. The Tele-phosphohistidine intermediate role is filled by H316. Position 335-345 (335-345) interacts with CoA; sequence MREAGFYVPDT.

The protein belongs to the succinate/malate CoA ligase alpha subunit family. Composed of two subunits.

It is found in the cytoplasm. The catalysed reaction is oxaloacetate + acetyl-CoA + ADP + phosphate = citrate + ATP + CoA. Its function is as follows. Catalyzes the formation of cytosolic acetyl-CoA, which is mainly used for the biosynthesis of fatty acids and sterols. The chain is Probable ATP-citrate synthase subunit 1 from Neurospora crassa (strain ATCC 24698 / 74-OR23-1A / CBS 708.71 / DSM 1257 / FGSC 987).